An 83-amino-acid polypeptide reads, in one-letter code: Major outer membrane lipoprotein (83 aa).

The N-terminal stretch at 1-19 is a signal peptide; that stretch reads MNNVLKFSALALAAVLATG. A lipid anchor (N-palmitoyl cysteine) is attached at Cys-20. Cys-20 carries S-diacylglycerol cysteine lipidation.

The protein localises to the cell outer membrane. The sequence is that of Major outer membrane lipoprotein (oprI) from Pseudomonas aeruginosa (strain ATCC 15692 / DSM 22644 / CIP 104116 / JCM 14847 / LMG 12228 / 1C / PRS 101 / PAO1).